A 491-amino-acid polypeptide reads, in one-letter code: MEPSILLLLALLVGFLLLLVRGHPKSRGNFPPGPRPLPLLGNLLQLDRGGLLNSFMQLREKYGDVFTVHLGPRPVVMLCGTDTIKEALVGQAEDFSGRGTIAVIEPIFKEYGVIFANGERWKALRRFSLATMRDFGMGKRSVEERIQEEAQCLVEELRKSQGAPLDPTFLFQCITANIICSIVFGERFDYTDRQFLRLLELFYRTFSLLSSFSSQVFEFFSGFLKYFPGAHRQISKNLQEILDYIGHIVEKHRATLDPSAPRDFIDTYLLRMEKEKSNHHTEFHHENLMISLLSLFFAGTETGSTTLRYGFLLMLKYPHVTEKVQKEIDQVIGSHRPPSLDDRTKMPYTDAVIHEIQRFADLAPIGLPHRVTKDTMFRGYLLPKNTEVYPILSSALHDPQYFDHPDTFNPEHFLDADGTLKKSEAFMPFSTGKRICLGEGIARNELFLFFTTILQNFSVSSHLAPKDIDLTPKESGIAKIPPTYQICFSAR.

The residue at position 128 (Ser-128) is a Phosphoserine; by PKA. Cys-436 provides a ligand contact to heme.

Belongs to the cytochrome P450 family. Heme is required as a cofactor. Phosphorylation is accompanied by a decrease in enzyme activity.

Its subcellular location is the endoplasmic reticulum membrane. The protein localises to the microsome membrane. It carries out the reaction an organic molecule + reduced [NADPH--hemoprotein reductase] + O2 = an alcohol + oxidized [NADPH--hemoprotein reductase] + H2O + H(+). In terms of biological role, cytochromes P450 are a group of heme-thiolate monooxygenases. In liver microsomes, this enzyme is involved in an NADPH-dependent electron transport pathway. It oxidizes a variety of structurally unrelated compounds, including steroids, fatty acids, and xenobiotics. This chain is Cytochrome P450 2B2 (Cyp2b2), found in Rattus norvegicus (Rat).